Here is a 192-residue protein sequence, read N- to C-terminus: uncharacterized protein (192 aa).

The Nudix hydrolase domain maps to 29-160 (HRQAAVLIPI…PLDIYRRGDS (132 aa)). The short motif at 67–89 (GAVDDTDASVIAAALREAEEEVA) is the Nudix box element. The Mg(2+) site is built by glutamate 83 and glutamate 87.

It belongs to the Nudix hydrolase family. PCD1 subfamily. The cofactor is Mn(2+). Mg(2+) is required as a cofactor.

In terms of biological role, probably mediates the hydrolysis of some nucleoside diphosphate derivatives. This is an uncharacterized protein from Shigella flexneri serotype 5b (strain 8401).